The primary structure comprises 562 residues: UPF0649 protein C1442.02 (562 aa).

2 positions are modified to phosphoserine: Ser285 and Ser286. The tract at residues 288–308 is disordered; that stretch reads DEEIAKNADVPAEVDNNSTKA.

This sequence belongs to the UPF0649 family.

It is found in the cytoplasm. It localises to the nucleus. The protein is UPF0649 protein C1442.02 of Schizosaccharomyces pombe (strain 972 / ATCC 24843) (Fission yeast).